The chain runs to 155 residues: Small ribosomal subunit protein uS7 (155 aa).

Belongs to the universal ribosomal protein uS7 family. As to quaternary structure, part of the 30S ribosomal subunit. Contacts proteins S9 and S11.

Functionally, one of the primary rRNA binding proteins, it binds directly to 16S rRNA where it nucleates assembly of the head domain of the 30S subunit. Is located at the subunit interface close to the decoding center, probably blocks exit of the E-site tRNA. This chain is Small ribosomal subunit protein uS7, found in Mycoplasmoides gallisepticum (strain R(low / passage 15 / clone 2)) (Mycoplasma gallisepticum).